The following is a 232-amino-acid chain: MDYIKGIAFDLYGTLFDVHSVVGRCDEAFPGRGREISALWRQKQLEYTWLRSLMNRYVNFQQATEDALRFTCRHLGLDLDARTRSTLCDAYLRLAPFSEVPDSLRELKRRGLKLAILSNGSPQSIDAVVSHAGLRDGFDHLLSVDPVQVYKPDNRVYELAEQALGLDRSAILFVSSNAWDATGARYFGFPTCWINRTGNVFEEMGQTPDWEVTSLRAVVELFETAAGKAEKG.

The active-site Nucleophile is Asp-10. Residues 11-12 (LY), Arg-41, and 118-119 (SN) contribute to the an (S)-2-haloacid site. Positions 175–180 (SSNAWD) are important for catalytic activity.

It belongs to the HAD-like hydrolase superfamily. S-2-haloalkanoic acid dehalogenase family. As to quaternary structure, homodimer.

It carries out the reaction an (S)-2-haloacid + H2O = a (2R)-2-hydroxycarboxylate + a halide anion + H(+). It catalyses the reaction (S)-2-chloropropanoate + H2O = (R)-lactate + chloride + H(+). Catalyzes the hydrolytic dehalogenation of small (S)-2-haloalkanoic acids to yield the corresponding (R)-2-hydroxyalkanoic acids. Acts on acids of short chain lengths, C(2) to C(4), with inversion of configuration at C-2. Active with 2-halogenated carboxylic acids and converts only the S-isomer (or L-isomer) of 2-chloropropionic acid with inversion of configuration to produce R-lactate (or D-isomer). The sequence is that of (S)-2-haloacid dehalogenase from Pseudomonas sp. (strain YL).